Here is a 66-residue protein sequence, read N- to C-terminus: ATP synthase protein 8 (66 aa).

The chain crosses the membrane as a helical span at residues 8–24 (PWPMVIMSMILTLFYIT). At Lys54 the chain carries N6-acetyllysine; alternate. Lys54 is modified (N6-succinyllysine; alternate). An N6-acetyllysine modification is found at Lys57.

This sequence belongs to the ATPase protein 8 family. As to quaternary structure, F-type ATPases have 2 components, CF(1) - the catalytic core - and CF(0) - the membrane proton channel. Component of an ATP synthase complex composed of ATP5PB, ATP5MC1, ATP5F1E, ATP5PD, ATP5ME, ATP5PF, ATP5MF, MT-ATP6, MT-ATP8, ATP5F1A, ATP5F1B, ATP5F1D, ATP5F1C, ATP5PO, ATP5MG, ATP5MK and ATP5MJ. Interacts with PRICKLE3.

The protein resides in the mitochondrion membrane. Functionally, mitochondrial membrane ATP synthase (F(1)F(0) ATP synthase or Complex V) produces ATP from ADP in the presence of a proton gradient across the membrane which is generated by electron transport complexes of the respiratory chain. F-type ATPases consist of two structural domains, F(1) - containing the extramembraneous catalytic core and F(0) - containing the membrane proton channel, linked together by a central stalk and a peripheral stalk. During catalysis, ATP synthesis in the catalytic domain of F(1) is coupled via a rotary mechanism of the central stalk subunits to proton translocation. Part of the complex F(0) domain. Minor subunit located with subunit a in the membrane. In Alouatta guariba (Brown howler monkey), this protein is ATP synthase protein 8 (MT-ATP8).